Here is a 252-residue protein sequence, read N- to C-terminus: uncharacterized protein (252 aa).

A coiled-coil region spans residues 106–140; the sequence is IQSLHARRDHLDNAVEQLKSQLSRLDSSVAILKSQ.

This is an uncharacterized protein from Caenorhabditis elegans.